The chain runs to 142 residues: MYLQPKKVRWRKQRRGTLKGKAFRGNKLAFGEYGIQALDRAWITQQQIEAVRVALVRSLKKGAKVWIRIFPDKPYTKKPNEVRMGGGKGDPEGFVAVVKPGRILFEFTGVPEEVAQEAFTIAASKLPIPVRLVKYGEFTFKY.

The protein belongs to the universal ribosomal protein uL16 family. Part of the 50S ribosomal subunit.

Its function is as follows. Binds 23S rRNA and is also seen to make contacts with the A and possibly P site tRNAs. The sequence is that of Large ribosomal subunit protein uL16 from Aquifex aeolicus (strain VF5).